A 435-amino-acid chain; its full sequence is 5-methylthioadenosine/S-adenosylhomocysteine deaminase (435 aa).

Zn(2+) is bound by residues histidine 65 and histidine 67. The substrate site is built by glutamate 94, arginine 150, and histidine 189. Histidine 216 is a binding site for Zn(2+). Glutamate 219 and aspartate 304 together coordinate substrate. Position 304 (aspartate 304) interacts with Zn(2+).

It belongs to the metallo-dependent hydrolases superfamily. MTA/SAH deaminase family. Requires Zn(2+) as cofactor.

It catalyses the reaction S-adenosyl-L-homocysteine + H2O + H(+) = S-inosyl-L-homocysteine + NH4(+). It carries out the reaction S-methyl-5'-thioadenosine + H2O + H(+) = S-methyl-5'-thioinosine + NH4(+). Its function is as follows. Catalyzes the deamination of 5-methylthioadenosine and S-adenosyl-L-homocysteine into 5-methylthioinosine and S-inosyl-L-homocysteine, respectively. Is also able to deaminate adenosine. The chain is 5-methylthioadenosine/S-adenosylhomocysteine deaminase from Bacillus thuringiensis (strain Al Hakam).